We begin with the raw amino-acid sequence, 308 residues long: MVNFTHVSEFVLLGFQGGPGMQAMLFLIFLILYGIAVVGNLGMIVIIWVDAHLHTPMYAFLQSLSLLDICYSSTIAPRALANSMQEDHTISFGGCAAQFFFLSLFGITEAFLLAAMAYDRFIAICNPLLYSVSMSHQVCVLLISGSYLWGVVNAIAQTTMTFRLPFCGSNEINDFFCDVPPLLSLSCSDTFINQLVLLGLCGSIIVSTFLIVLVSYIYIISTILRIPTMQGCQKAFSTCASHLTGVCLFFGTVFFMYAQPSAIFFMEQSKIVSIFYTMVIPMLNPLIYSLRNKEVKQALRRSMQKLSL.

Over 1-26 (MVNFTHVSEFVLLGFQGGPGMQAMLF) the chain is Extracellular. Residues 27–47 (LIFLILYGIAVVGNLGMIVII) form a helical membrane-spanning segment. The Cytoplasmic segment spans residues 48-58 (WVDAHLHTPMY). Residues 59 to 81 (AFLQSLSLLDICYSSTIAPRALA) traverse the membrane as a helical segment. The Extracellular portion of the chain corresponds to 82-95 (NSMQEDHTISFGGC). Cys95 and Cys177 form a disulfide bridge. Residues 96–116 (AAQFFFLSLFGITEAFLLAAM) form a helical membrane-spanning segment. Residues 117–137 (AYDRFIAICNPLLYSVSMSHQ) lie on the Cytoplasmic side of the membrane. The helical transmembrane segment at 138–158 (VCVLLISGSYLWGVVNAIAQT) threads the bilayer. Over 159–203 (TMTFRLPFCGSNEINDFFCDVPPLLSLSCSDTFINQLVLLGLCGS) the chain is Extracellular. The helical transmembrane segment at 204-224 (IIVSTFLIVLVSYIYIISTIL) threads the bilayer. Over 225–245 (RIPTMQGCQKAFSTCASHLTG) the chain is Cytoplasmic. The helical transmembrane segment at 246 to 266 (VCLFFGTVFFMYAQPSAIFFM) threads the bilayer. At 267-269 (EQS) the chain is on the extracellular side. The chain crosses the membrane as a helical span at residues 270–290 (KIVSIFYTMVIPMLNPLIYSL). The Cytoplasmic portion of the chain corresponds to 291–308 (RNKEVKQALRRSMQKLSL).

The protein belongs to the G-protein coupled receptor 1 family.

The protein resides in the cell membrane. Its function is as follows. Odorant receptor. The sequence is that of Olfactory receptor OR9H1 from Homo sapiens (Human).